Here is a 258-residue protein sequence, read N- to C-terminus: Putative cysteine-rich repeat secretory protein 61 (258 aa).

A signal peptide spans 1–31 (MSSSFIPKRIALVLNLAMVAIQVFFIRSVSS). 2 Gnk2-homologous domains span residues 38–140 (YLYH…PTAF) and 146–253 (DKNK…IYPF).

This sequence belongs to the cysteine-rich repeat secretory protein family.

The protein localises to the secreted. The polypeptide is Putative cysteine-rich repeat secretory protein 61 (CRRSP61) (Arabidopsis thaliana (Mouse-ear cress)).